A 406-amino-acid polypeptide reads, in one-letter code: Peptide antibiotic transporter SbmA (406 aa).

Topologically, residues 1 to 11 (MFKSFFPKPGT) are periplasmic. A helical membrane pass occupies residues 12–32 (FFLSAFVWALIAVIFWQAGGG). Over 33-56 (DWVARITGASGQIPISAARFWSLD) the chain is Cytoplasmic. A helical membrane pass occupies residues 57–77 (FLIFYAYYIVCVGLFALFWFI). Residues 78 to 87 (YSPHRWQYWS) lie on the Periplasmic side of the membrane. Residues 88–108 (ILGTALIIFVTWFLVEVGVAV) form a helical membrane-spanning segment. Topologically, residues 109–137 (NAWYAPFYDLIQTALSSPHKVTIEQFYRE) are cytoplasmic. A helical membrane pass occupies residues 138–158 (VGVFLGIALIAVVISVLNNFF). Residues 159-205 (VSHYVFRWRTAMNEYYMANWQQLRHIEGAAQRVQEDTMRFASTLENM) are Periplasmic-facing. A helical transmembrane segment spans residues 206-226 (GVSFINAIMTLIAFLPVLVTL). Over 227 to 242 (SAHVPELPIIGHIPYG) the chain is Cytoplasmic. A helical transmembrane segment spans residues 243–263 (LVIAAIVWSLMGTGLLAVVGI). Residues 264–331 (KLPGLEFKNQ…ARILYLQVDN (68 aa)) are Periplasmic-facing. Residues 332 to 352 (VFGLFLLFPSIVAGTITLGLM) traverse the membrane as a helical segment. At 353–406 (TQITNVFGQVRGAFQYLINSWTTLVELMSIYKRLRSFEHELDGDKIQEVTHTLS) the chain is on the cytoplasmic side.

The protein belongs to the peptide uptake permease (PUP) (TC 9.A.18) family.

Its subcellular location is the cell inner membrane. In terms of biological role, uptake of antimicrobial peptides. This is Peptide antibiotic transporter SbmA (sbmA) from Escherichia coli O157:H7.